The sequence spans 125 residues: Small ribosomal subunit protein uS12m (125 aa).

The disordered stretch occupies residues Met1–Leu26. Residues Leu8–Lys23 show a composition bias toward basic residues.

This sequence belongs to the universal ribosomal protein uS12 family.

The protein resides in the mitochondrion. This chain is Small ribosomal subunit protein uS12m (RPS12), found in Prototheca wickerhamii.